Consider the following 165-residue polypeptide: Lipoprotein signal peptidase (165 aa).

5 consecutive transmembrane segments (helical) span residues 10–30, 42–62, 71–91, 105–125, and 133–153; these read LKWLWLSILIMLLDIGTKYWV, VLPGINCYYVCNPGLAFGLFT, LFVWIITLVIVAFIIALYKLI, IGGALGNLLDRILYGAVVDFI, and HWPTFNVADIAICIGITIVTI. Catalysis depends on residues Asp123 and Asp141.

It belongs to the peptidase A8 family.

It is found in the cell inner membrane. The enzyme catalyses Release of signal peptides from bacterial membrane prolipoproteins. Hydrolyzes -Xaa-Yaa-Zaa-|-(S,diacylglyceryl)Cys-, in which Xaa is hydrophobic (preferably Leu), and Yaa (Ala or Ser) and Zaa (Gly or Ala) have small, neutral side chains.. It functions in the pathway protein modification; lipoprotein biosynthesis (signal peptide cleavage). Functionally, this protein specifically catalyzes the removal of signal peptides from prolipoproteins. This is Lipoprotein signal peptidase from Blochmanniella pennsylvanica (strain BPEN).